A 346-amino-acid chain; its full sequence is Olfactory receptor 13D1 (346 aa).

Over 1 to 57 (MYRFTDFDVSNISIYLNHVLFYTTQQAGDLEHMETRNYSAMTEFFLVGLSQYPELQL) the chain is Extracellular. N-linked (GlcNAc...) asparagine glycosylation is present at Asn-37. Residues 58–78 (FLFLLCLIMYMIILLGNSLLI) form a helical membrane-spanning segment. Topologically, residues 79–86 (IITILDSR) are cytoplasmic. Residues 87–107 (LHTPMYFFLGNLSFLDICYTS) form a helical membrane-spanning segment. At 108-131 (SSIPPMLIIFMSERKSISFIGCAL) the chain is on the extracellular side. An intrachain disulfide couples Cys-129 to Cys-221. Residues 132–152 (QMVVSLGLGSTECVLLAVMAY) traverse the membrane as a helical segment. Residues 153–171 (DHYVAICNPLRYSIIMNGV) lie on the Cytoplasmic side of the membrane. Residues 172–192 (LYVQMAAWSWIIGCLTSLLQT) traverse the membrane as a helical segment. Over 193–229 (VLTMMLPFCGNNVIDHITCEILALLKLVCSDITINVL) the chain is Extracellular. A helical transmembrane segment spans residues 230–249 (IMTVTNIVSLVILLLLIFIS). The Cytoplasmic segment spans residues 250–269 (YVFILSSILRINCAEGRKKA). A helical transmembrane segment spans residues 270–290 (FSTCSAHSIVVILFYGSALFM). At 291–303 (YMKPKSKNTNTSD) the chain is on the extracellular side. The N-linked (GlcNAc...) asparagine glycan is linked to Asn-300. The helical transmembrane segment at 304–324 (EIIGLSYGVVSPMLNPIIYSL) threads the bilayer. At 325 to 346 (RNKEVKEAVKKVLSRHLHLLKM) the chain is on the cytoplasmic side.

This sequence belongs to the G-protein coupled receptor 1 family.

It localises to the cell membrane. Odorant receptor. This chain is Olfactory receptor 13D1 (OR13D1), found in Homo sapiens (Human).